A 711-amino-acid polypeptide reads, in one-letter code: C-Jun-amino-terminal kinase-interacting protein 1 (711 aa).

Residues 1-27 (MAERESGGLGGGAASPPAASPFLGLHI) are disordered. The span at 14–25 (ASPPAASPFLGL) shows a compositional bias: low complexity. Phosphoserine is present on residues Ser-15, Ser-29, and Ser-40. Positions 78–371 (AGGGGAGSRL…PPRASLSSDT (294 aa)) are disordered. Thr-103 carries the post-translational modification Phosphothreonine; by MAPK8, MAPK9 and MAPK10. Residues 105–116 (GAEDDEEDDDEE) are compositionally biased toward acidic residues. Positions 127–285 (PKAESGQEPA…EATEEIYLTP (159 aa)) are JNK-binding domain (JBD). Residues 139–149 (GQGQSQGQSQG) show a composition bias toward low complexity. Position 152 is a phosphoserine (Ser-152). The tract at residues 157-176 (RPKRPTTLNLFPQVPRSQDT) is minimal inhibitory domain (MID). Polar residues predominate over residues 162–182 (TTLNLFPQVPRSQDTLNNNSL). A phosphoserine mark is found at Ser-181, Ser-187, Ser-193, Ser-195, and Ser-196. Polar residues predominate over residues 194-204 (RSSSPLKTGEQ). A Phosphothreonine; by MAPK8, MAPK9 and MAPK10 modification is found at Thr-205. Residue Ser-214 is modified to Phosphoserine. The span at 228–244 (DRGTSTDSPCRRSTATQ) shows a compositional bias: polar residues. A compositionally biased stretch (basic and acidic residues) spans 267–277 (IHYQADVRLEA). The tract at residues 283-471 (LTPVQRPPDA…NVFMSGRSRS (189 aa)) is interaction with MAP3K7. Phosphoserine is present on residues Ser-311, Ser-328, Ser-330, Ser-340, Ser-355, Ser-366, Ser-369, Ser-407, and Ser-409. 2 consecutive short sequence motifs (D-box) follow at residues 353 to 360 (RGSLGEPP) and 364 to 372 (RASLSSDTS). At Thr-411 the chain carries Phosphothreonine. The disordered stretch occupies residues 429 to 451 (EEYEEAPRPQPPACLSEDSTPDE). Phosphoserine occurs at positions 444 and 447. Thr-448 is subject to Phosphothreonine. Phosphoserine is present on residues Ser-469, Ser-471, Ser-472, and Ser-473. The interval 471–660 (SSSAESFGLF…PKNNKYFGFI (190 aa)) is interaction with VRK2. One can recognise an SH3 domain in the interval 488–549 (EQEQTHRAIF…PAYYAIEVTK (62 aa)). The PID domain maps to 561–700 (SDWVDQFRVK…FQQFYKQFVE (140 aa)).

It belongs to the JIP scaffold family. As to quaternary structure, forms homo- or heterooligomeric complexes. Binds specific components of the JNK signaling pathway namely, MAPK8/JNK1, MAPK9/JNK2, MAPK10/JNK3, MAP2K7/MKK7, MAP3K11/MLK3 and DLK1. Also binds the proline-rich domain-containing splice variant of apolipoprotein E receptor 2 (ApoER2). Interacts, via the PID domain, with ARHGEF28. Binds the cytoplasmic tails of LRP1 and LRP2 (Megalin). Binds the TPR motif-containing C-terminal of KNS2, then the pre-assembled MAPK8IP1 scaffolding complexes are transported as a cargo of kinesin, to the required subcellular location. Interacts with the cytoplasmic domain of APP. Interacts with DCLK2. Interacts with MAP3K7/TAK1. Interacts with isoform 1 and isoform 2 of VRK2. Found in a complex with SH3RF1, RAC1, MAP3K11/MLK3, MAP2K7/MKK7 and MAPK8/JNK1. Found in a complex with SH3RF1, RAC2, MAP3K7/TAK1, MAP2K7/MKK7, MAPK8/JNK1 and MAPK9/JNK2. Interacts with SH3RF2. Phosphorylated by MAPK8, MAPK9 and MAPK10. Phosphorylation on Thr-103 is also necessary for the dissociation and activation of MAP3K12. Phosphorylated by isoform 1 and isoform 2 of VRK2. Hyperphosphorylated during mitosis following activation of stress-activated and MAP kinases. In terms of processing, ubiquitinated. Two preliminary events are required to prime for ubiquitination; phosphorylation and an increased in intracellular calcium concentration. Then, the calcium influx initiates ubiquitination and degradation by the ubiquitin-proteasome pathway. In terms of tissue distribution, highly expressed in brain. Expressed in neurons, localizing to neurite tips in differentiating cells. Also expressed in the pancreas, testis and prostate. Low levels in heart, ovary and small intestine. Decreased levels in pancreatic beta cells sensitize cells to IL-1-beta-induced apoptosis.

Its subcellular location is the cytoplasm. The protein localises to the perinuclear region. It localises to the nucleus. It is found in the endoplasmic reticulum membrane. The protein resides in the mitochondrion membrane. In terms of biological role, the JNK-interacting protein (JIP) group of scaffold proteins selectively mediates JNK signaling by aggregating specific components of the MAPK cascade to form a functional JNK signaling module. Required for JNK activation in response to excitotoxic stress. Cytoplasmic MAPK8IP1 causes inhibition of JNK-regulated activity by retaining JNK in the cytoplasm and inhibiting JNK phosphorylation of c-Jun. May also participate in ApoER2-specific reelin signaling. Directly, or indirectly, regulates GLUT2 gene expression and beta-cell function. Appears to have a role in cell signaling in mature and developing nerve terminals. May function as a regulator of vesicle transport, through interactions with the JNK-signaling components and motor proteins. Functions as an anti-apoptotic protein and whose level seems to influence the beta-cell death or survival response. Acts as a scaffold protein that coordinates with SH3RF1 in organizing different components of the JNK pathway, including RAC1 or RAC2, MAP3K11/MLK3 or MAP3K7/TAK1, MAP2K7/MKK7, MAPK8/JNK1 and/or MAPK9/JNK2 into a functional multiprotein complex to ensure the effective activation of the JNK signaling pathway. Regulates the activation of MAPK8/JNK1 and differentiation of CD8(+) T-cells. The polypeptide is C-Jun-amino-terminal kinase-interacting protein 1 (MAPK8IP1) (Homo sapiens (Human)).